The sequence spans 231 residues: Eukaryotic translation initiation factor 4E allele A (231 aa).

A compositionally biased stretch (basic and acidic residues) spans 1–20; that stretch reads MAAAEMERTTSFDAAEKLKA. Positions 1–36 are disordered; it reads MAAAEMERTTSFDAAEKLKAADAGGGEVDDELEEGE. Residues 27 to 36 show a composition bias toward acidic residues; it reads EVDDELEEGE. EIF4G-binding stretches follow at residues 56-59 and 66-102; these read HPLE and FDSP…NNIH. MRNA is bound by residues 74 to 79, Lys106, and 124 to 125; these read RQTAWG and WE. Cys129 and Cys167 are disulfide-bonded. The interval 150 to 159 is EIF4G-binding; the sequence is YTLLAMIGHQ. MRNA-binding positions include 174-179 and 219-223; these read RSKGEK and KRLDR.

It belongs to the eukaryotic initiation factor 4E family. As to quaternary structure, EIF4F is a multi-subunit complex, the composition of which varies with external and internal environmental conditions. It is composed of at least EIF4A, EIF4E and EIF4G. EIF4E is also known to interact with other partners. In higher plants two isoforms of EIF4F have been identified, named isoform EIF4F and isoform EIF(iso)4F. Isoform EIF4F has subunits p220 and p26, whereas isoform EIF(iso)4F has subunits p82 and p28. In terms of assembly, (Microbial infection) Interacts with viral genome-linked protein (VPg); this interaction is possible in susceptible hosts but impaired in resistant plants. According to the redox status, the Cys-129-Cys-167 disulfide bridge may have a role in regulating protein function by affecting its ability to bind capped mRNA.

The protein resides in the nucleus. Its subcellular location is the cytoplasm. Its function is as follows. Component of the protein complex eIF4F, which is involved in the recognition of the mRNA cap, ATP-dependent unwinding of 5'-terminal secondary structure and recruitment of mRNA to the ribosome. Recognizes and binds the 7-methylguanosine-containing mRNA cap during an early step in the initiation of protein synthesis and facilitates ribosome binding by inducing the unwinding of the mRNAs secondary structures. Key component of recessive resistance to potyviruses. In terms of biological role, (Microbial infection) Susceptibility host factor required for viral infection (e.g. Potato virus Y (PVY)) by recruiting viral RNAs to the host ribosomal complex via an interaction with viral genome-linked protein (VPg). The polypeptide is Eukaryotic translation initiation factor 4E allele A (Solanum tuberosum (Potato)).